The following is a 239-amino-acid chain: tRNA (guanine-N(7)-)-methyltransferase (239 aa).

S-adenosyl-L-methionine is bound by residues Glu69, Glu94, Asp121, and Asp144. Asp144 is a catalytic residue. Residue Lys148 coordinates substrate. The interaction with RNA stretch occupies residues 150–155 (RHNKRR). Residues Asp180 and 217 to 220 (TKFE) each bind substrate.

This sequence belongs to the class I-like SAM-binding methyltransferase superfamily. TrmB family. Monomer.

The enzyme catalyses guanosine(46) in tRNA + S-adenosyl-L-methionine = N(7)-methylguanosine(46) in tRNA + S-adenosyl-L-homocysteine. It functions in the pathway tRNA modification; N(7)-methylguanine-tRNA biosynthesis. In terms of biological role, catalyzes the formation of N(7)-methylguanine at position 46 (m7G46) in tRNA. The polypeptide is tRNA (guanine-N(7)-)-methyltransferase (Pectobacterium atrosepticum (strain SCRI 1043 / ATCC BAA-672) (Erwinia carotovora subsp. atroseptica)).